The chain runs to 160 residues: 6,7-dimethyl-8-ribityllumazine synthase (160 aa).

5-amino-6-(D-ribitylamino)uracil contacts are provided by residues Trp27, 59–61 (AIE), and 81–83 (VVI). 86–87 (QT) contributes to the (2S)-2-hydroxy-3-oxobutyl phosphate binding site. The active-site Proton donor is the His89. Asn114 is a 5-amino-6-(D-ribitylamino)uracil binding site. Position 128 (Arg128) interacts with (2S)-2-hydroxy-3-oxobutyl phosphate.

It belongs to the DMRL synthase family. As to quaternary structure, homopentamer.

The enzyme catalyses (2S)-2-hydroxy-3-oxobutyl phosphate + 5-amino-6-(D-ribitylamino)uracil = 6,7-dimethyl-8-(1-D-ribityl)lumazine + phosphate + 2 H2O + H(+). It functions in the pathway cofactor biosynthesis; riboflavin biosynthesis; riboflavin from 2-hydroxy-3-oxobutyl phosphate and 5-amino-6-(D-ribitylamino)uracil: step 1/2. In terms of biological role, catalyzes the formation of 6,7-dimethyl-8-ribityllumazine by condensation of 5-amino-6-(D-ribitylamino)uracil with 3,4-dihydroxy-2-butanone 4-phosphate. This is the penultimate step in the biosynthesis of riboflavin. The sequence is that of 6,7-dimethyl-8-ribityllumazine synthase from Mycolicibacterium paratuberculosis (strain ATCC BAA-968 / K-10) (Mycobacterium paratuberculosis).